We begin with the raw amino-acid sequence, 502 residues long: ATP synthase subunit alpha, chloroplastic (502 aa).

170–177 provides a ligand contact to ATP; the sequence is GDRQTGKS.

It belongs to the ATPase alpha/beta chains family. As to quaternary structure, F-type ATPases have 2 components, CF(1) - the catalytic core - and CF(0) - the membrane proton channel. CF(1) has five subunits: alpha(3), beta(3), gamma(1), delta(1), epsilon(1). CF(0) has four main subunits: a, b, b' and c.

The protein resides in the plastid. It localises to the chloroplast thylakoid membrane. It catalyses the reaction ATP + H2O + 4 H(+)(in) = ADP + phosphate + 5 H(+)(out). Functionally, produces ATP from ADP in the presence of a proton gradient across the membrane. The alpha chain is a regulatory subunit. This Guillardia theta (Cryptophyte) protein is ATP synthase subunit alpha, chloroplastic.